Reading from the N-terminus, the 313-residue chain is HTH-type transcriptional regulator CysB (313 aa).

In terms of domain architecture, HTH lysR-type spans 1–59 (MNLHQFRFVREAVRQNFNLTEAAKALYTSQPGVSKAIIELEDELGVEIFTRHGKRVRSL). The segment at residues 19 to 38 (LTEAAKALYTSQPGVSKAII) is a DNA-binding region (H-T-H motif).

It belongs to the LysR transcriptional regulatory family.

Functionally, transcriptional regulator preferentially involved in the control of sulfate transport and reduction. Binds to DNA at target promoter regions. The polypeptide is HTH-type transcriptional regulator CysB (Burkholderia cenocepacia (strain ATCC BAA-245 / DSM 16553 / LMG 16656 / NCTC 13227 / J2315 / CF5610) (Burkholderia cepacia (strain J2315))).